Here is a 1620-residue protein sequence, read N- to C-terminus: ABC-type organic anion transporter ABCA8A (1620 aa).

Helical transmembrane passes span Thr30–Leu50, Cys224–Val244, Ser263–Leu283, Val294–Ile314, Phe328–Ala348, Leu357–Leu377, and Ile397–Phe417. N-linked (GlcNAc...) asparagine glycans are attached at residues Asn454 and Asn482. The ABC transporter 1 domain maps to Ile478–Gln713. ATP is bound at residue Gly514–Ser521. The chain crosses the membrane as a helical span at residues Ile861 to Tyr881. A glycan (N-linked (GlcNAc...) asparagine) is linked at Asn967. The next 7 membrane-spanning stretches (helical) occupy residues Cys979–Ala999, Tyr1019–Met1039, Ala1068–Ala1088, Ile1105–Ile1125, Ser1133–Ile1153, Ile1159–Leu1179, and Glu1196–Leu1216. Residues Leu1284–Lys1517 enclose the ABC transporter 2 domain. Gly1322–Ser1329 is a binding site for ATP.

The protein belongs to the ABC transporter superfamily. ABCA family. Expressed in lung, heart, liver, skeletal muscle and testis. Highly expressed in the liver, and is also abundant in heart and skeletal muscle. Highly expressed in heart.

Its subcellular location is the cell membrane. It localises to the basolateral cell membrane. The enzyme catalyses taurocholate(in) + ATP + H2O = taurocholate(out) + ADP + phosphate + H(+). It carries out the reaction cholesterol(in) + ATP + H2O = cholesterol(out) + ADP + phosphate + H(+). With respect to regulation, cholesterol efflux is increased by extracellularly applied taurocholate. Functionally, mediates cholesterol and taurocholate efflux. Through the interaction with ABCA1 potentiates the cholesterol efflux to lipid-free APOA1, in turn regulates high-density lipoprotein cholesterol levels. The sequence is that of ABC-type organic anion transporter ABCA8A from Mus musculus (Mouse).